Reading from the N-terminus, the 122-residue chain is Small ribosomal subunit protein uS12 (122 aa).

Residues 1–24 (MPTINQLIRKKRKSTGKKRTAPAL) are disordered. The segment covering 8–20 (IRKKRKSTGKKRT) has biased composition (basic residues). The residue at position 89 (aspartate 89) is a 3-methylthioaspartic acid.

The protein belongs to the universal ribosomal protein uS12 family. Part of the 30S ribosomal subunit. Contacts proteins S8 and S17. May interact with IF1 in the 30S initiation complex.

With S4 and S5 plays an important role in translational accuracy. Functionally, interacts with and stabilizes bases of the 16S rRNA that are involved in tRNA selection in the A site and with the mRNA backbone. Located at the interface of the 30S and 50S subunits, it traverses the body of the 30S subunit contacting proteins on the other side and probably holding the rRNA structure together. The combined cluster of proteins S8, S12 and S17 appears to hold together the shoulder and platform of the 30S subunit. This chain is Small ribosomal subunit protein uS12, found in Natranaerobius thermophilus (strain ATCC BAA-1301 / DSM 18059 / JW/NM-WN-LF).